A 414-amino-acid chain; its full sequence is 2,3-diketo-5-methylthiopentyl-1-phosphate enolase (414 aa).

Residue Lys99 is the Proton acceptor of the active site. Substrate contacts are provided by residues Lys148, 174–177 (KDDE), His265, Gly338, and 360–361 (GG). Mg(2+)-binding residues include Lys174, Asp176, and Glu177. Lys174 bears the N6-carboxylysine mark.

It belongs to the RuBisCO large chain family. Type IV subfamily. As to quaternary structure, homodimer. Mg(2+) serves as cofactor.

The catalysed reaction is 5-methylsulfanyl-2,3-dioxopentyl phosphate = 2-hydroxy-5-methylsulfanyl-3-oxopent-1-enyl phosphate. Its pathway is amino-acid biosynthesis; L-methionine biosynthesis via salvage pathway; L-methionine from S-methyl-5-thio-alpha-D-ribose 1-phosphate: step 3/6. In terms of biological role, catalyzes the enolization of 2,3-diketo-5-methylthiopentyl-1-phosphate (DK-MTP-1-P) into 2-hydroxy-3-keto-5-methylthiopentenyl-1-phosphate (HK-MTPenyl-1-P). This chain is 2,3-diketo-5-methylthiopentyl-1-phosphate enolase, found in Bacillus thuringiensis (strain Al Hakam).